A 196-amino-acid polypeptide reads, in one-letter code: ATP-dependent Clp protease proteolytic subunit (196 aa).

S101 (nucleophile) is an active-site residue. H126 is a catalytic residue.

The protein belongs to the peptidase S14 family. As to quaternary structure, component of the chloroplastic Clp protease core complex.

It localises to the plastid. The protein localises to the chloroplast stroma. It catalyses the reaction Hydrolysis of proteins to small peptides in the presence of ATP and magnesium. alpha-casein is the usual test substrate. In the absence of ATP, only oligopeptides shorter than five residues are hydrolyzed (such as succinyl-Leu-Tyr-|-NHMec, and Leu-Tyr-Leu-|-Tyr-Trp, in which cleavage of the -Tyr-|-Leu- and -Tyr-|-Trp bonds also occurs).. Cleaves peptides in various proteins in a process that requires ATP hydrolysis. Has a chymotrypsin-like activity. Plays a major role in the degradation of misfolded proteins. In Citrus sinensis (Sweet orange), this protein is ATP-dependent Clp protease proteolytic subunit.